Reading from the N-terminus, the 551-residue chain is Arginine--tRNA ligase (551 aa).

The 'HIGH' region motif lies at 123 to 133 (ANPTGPLTIGR).

This sequence belongs to the class-I aminoacyl-tRNA synthetase family. As to quaternary structure, monomer.

Its subcellular location is the cytoplasm. The catalysed reaction is tRNA(Arg) + L-arginine + ATP = L-arginyl-tRNA(Arg) + AMP + diphosphate. In Chlorobium phaeobacteroides (strain DSM 266 / SMG 266 / 2430), this protein is Arginine--tRNA ligase.